A 560-amino-acid chain; its full sequence is Formate--tetrahydrofolate ligase (560 aa).

69 to 76 provides a ligand contact to ATP; that stretch reads TPAGEGKS.

Belongs to the formate--tetrahydrofolate ligase family.

The enzyme catalyses (6S)-5,6,7,8-tetrahydrofolate + formate + ATP = (6R)-10-formyltetrahydrofolate + ADP + phosphate. Its pathway is one-carbon metabolism; tetrahydrofolate interconversion. The sequence is that of Formate--tetrahydrofolate ligase from Listeria innocua serovar 6a (strain ATCC BAA-680 / CLIP 11262).